Reading from the N-terminus, the 552-residue chain is CTP synthase (552 aa).

The amidoligase domain stretch occupies residues 1–270 (MTKYVFVTGG…DRIICEELKL (270 aa)). Serine 13 serves as a coordination point for CTP. Residue serine 13 participates in UTP binding. Residues 14 to 19 (SLGKGI) and aspartate 71 each bind ATP. Aspartate 71 and glutamate 144 together coordinate Mg(2+). CTP-binding positions include 151–153 (DIE), 191–196 (KTKPTQ), and lysine 227. UTP is bound by residues 191–196 (KTKPTQ) and lysine 227. Residues 295–547 (TIGMVGKYVD…VEAALANKQA (253 aa)) form the Glutamine amidotransferase type-1 domain. Residue glycine 356 coordinates L-glutamine. Cysteine 383 functions as the Nucleophile; for glutamine hydrolysis in the catalytic mechanism. L-glutamine-binding positions include 384 to 387 (LGMQ), glutamate 407, and arginine 473. Residues histidine 520 and glutamate 522 contribute to the active site.

It belongs to the CTP synthase family. In terms of assembly, homotetramer.

It catalyses the reaction UTP + L-glutamine + ATP + H2O = CTP + L-glutamate + ADP + phosphate + 2 H(+). It carries out the reaction L-glutamine + H2O = L-glutamate + NH4(+). The catalysed reaction is UTP + NH4(+) + ATP = CTP + ADP + phosphate + 2 H(+). Its pathway is pyrimidine metabolism; CTP biosynthesis via de novo pathway; CTP from UDP: step 2/2. Allosterically activated by GTP, when glutamine is the substrate; GTP has no effect on the reaction when ammonia is the substrate. The allosteric effector GTP functions by stabilizing the protein conformation that binds the tetrahedral intermediate(s) formed during glutamine hydrolysis. Inhibited by the product CTP, via allosteric rather than competitive inhibition. Functionally, catalyzes the ATP-dependent amination of UTP to CTP with either L-glutamine or ammonia as the source of nitrogen. Regulates intracellular CTP levels through interactions with the four ribonucleotide triphosphates. The chain is CTP synthase from Burkholderia ambifaria (strain MC40-6).